The following is a 42-amino-acid chain: uncharacterized protein (42 aa).

Its subcellular location is the cytoplasm. This is an uncharacterized protein from Escherichia coli (strain K12).